Consider the following 215-residue polypeptide: Transmembrane protein 267 (215 aa).

3 consecutive transmembrane segments (helical) span residues 77–97 (FGEI…HFLL), 114–134 (FLHC…TMHF), and 178–198 (FWLY…VMYF).

The protein localises to the membrane. This is Transmembrane protein 267 (TMEM267) from Bos taurus (Bovine).